A 389-amino-acid polypeptide reads, in one-letter code: Glutaryl-CoA dehydrogenase (389 aa).

Positions 87 and 91 each coordinate substrate. FAD is bound by residues 126–129, serine 135, and 159–161; these read FGIT and WIS. Position 135 (serine 135) interacts with substrate. Serine 181 provides a ligand contact to substrate. FAD is bound by residues arginine 271, 281–284, arginine 340, alanine 344, and 367–371; these read FQMN and EGSAN. Glutamate 367 (proton acceptor) is an active-site residue. Residue arginine 385 coordinates substrate.

The protein belongs to the acyl-CoA dehydrogenase family. In terms of assembly, homotetramer. It depends on FAD as a cofactor.

It catalyses the reaction glutaryl-CoA + A = (2E)-glutaconyl-CoA + AH2. Its pathway is aromatic compound metabolism; benzoyl-CoA degradation. Inhibited by glutaconyl-CoA. Catalyzes the dehydrogenation of Glutaryl-CoA to glutaconyl-CoA. In Desulfococcus multivorans, this protein is Glutaryl-CoA dehydrogenase (Acd).